We begin with the raw amino-acid sequence, 200 residues long: 3-isopropylmalate dehydratase small subunit (200 aa).

It belongs to the LeuD family. LeuD type 1 subfamily. Heterodimer of LeuC and LeuD.

The enzyme catalyses (2R,3S)-3-isopropylmalate = (2S)-2-isopropylmalate. The protein operates within amino-acid biosynthesis; L-leucine biosynthesis; L-leucine from 3-methyl-2-oxobutanoate: step 2/4. Its function is as follows. Catalyzes the isomerization between 2-isopropylmalate and 3-isopropylmalate, via the formation of 2-isopropylmaleate. This chain is 3-isopropylmalate dehydratase small subunit, found in Vibrio vulnificus (strain CMCP6).